The following is a 272-amino-acid chain: Large ribosomal subunit protein uL2cz/uL2cy (272 aa).

Residues 1 to 13 are compositionally biased toward polar residues; it reads MHLYKTSTPSTRN. Disordered regions lie at residues 1 to 27 and 222 to 272; these read MHLY…PRNN and NPVD…RRSK.

The protein belongs to the universal ribosomal protein uL2 family. As to quaternary structure, part of the 50S ribosomal subunit.

The protein localises to the plastid. It localises to the chloroplast. This Buxus microphylla (Littleleaf boxwood) protein is Large ribosomal subunit protein uL2cz/uL2cy (rpl2-A).